A 476-amino-acid polypeptide reads, in one-letter code: Bifunctional protein HldE (476 aa).

The segment at 1 to 319 (MKISLPAFEK…EALSLSHGES (319 aa)) is ribokinase. 195 to 198 (NMSE) is an ATP binding site. Asp-264 is a catalytic residue. Residues 345–476 (MTNGCFDILH…AIIQNIMANQ (132 aa)) form a cytidylyltransferase region.

This sequence in the N-terminal section; belongs to the carbohydrate kinase PfkB family. In the C-terminal section; belongs to the cytidylyltransferase family. Homodimer.

It catalyses the reaction D-glycero-beta-D-manno-heptose 7-phosphate + ATP = D-glycero-beta-D-manno-heptose 1,7-bisphosphate + ADP + H(+). The enzyme catalyses D-glycero-beta-D-manno-heptose 1-phosphate + ATP + H(+) = ADP-D-glycero-beta-D-manno-heptose + diphosphate. Its pathway is nucleotide-sugar biosynthesis; ADP-L-glycero-beta-D-manno-heptose biosynthesis; ADP-L-glycero-beta-D-manno-heptose from D-glycero-beta-D-manno-heptose 7-phosphate: step 1/4. The protein operates within nucleotide-sugar biosynthesis; ADP-L-glycero-beta-D-manno-heptose biosynthesis; ADP-L-glycero-beta-D-manno-heptose from D-glycero-beta-D-manno-heptose 7-phosphate: step 3/4. Functionally, catalyzes the phosphorylation of D-glycero-D-manno-heptose 7-phosphate at the C-1 position to selectively form D-glycero-beta-D-manno-heptose-1,7-bisphosphate. Its function is as follows. Catalyzes the ADP transfer from ATP to D-glycero-beta-D-manno-heptose 1-phosphate, yielding ADP-D-glycero-beta-D-manno-heptose. The polypeptide is Bifunctional protein HldE (Shewanella pealeana (strain ATCC 700345 / ANG-SQ1)).